Reading from the N-terminus, the 852-residue chain is Serine/threonine-protein phosphatase 6 regulatory subunit 3-A (852 aa).

Disordered stretches follow at residues 610–653 (NIAF…VNHE), 714–742 (NTKE…VNAS), and 817–852 (DSAM…NGPV). Over residues 627–638 (DSEESTDSEEEE) the composition is skewed to acidic residues. The segment covering 714–732 (NTKETIRSSSPVEMETSTE) has biased composition (polar residues). Over residues 828-840 (PSSSSQEQRTSEQ) the composition is skewed to low complexity.

The protein belongs to the SAPS family.

Regulatory subunit of protein phosphatase 6 (PP6). May function as a scaffolding PP6 subunit. This Xenopus laevis (African clawed frog) protein is Serine/threonine-protein phosphatase 6 regulatory subunit 3-A (ppp6r3-a).